The sequence spans 827 residues: DNA gyrase subunit A (827 aa).

A Topo IIA-type catalytic domain is found at 38–501 (LPDARDGLKP…SYENIDIEDL (464 aa)). Tyr126 functions as the O-(5'-phospho-DNA)-tyrosine intermediate in the catalytic mechanism. A GyrA-box motif is present at residues 528–534 (QNRGGKG).

This sequence belongs to the type II topoisomerase GyrA/ParC subunit family. In terms of assembly, heterotetramer, composed of two GyrA and two GyrB chains. In the heterotetramer, GyrA contains the active site tyrosine that forms a transient covalent intermediate with DNA, while GyrB binds cofactors and catalyzes ATP hydrolysis.

The protein localises to the cytoplasm. The enzyme catalyses ATP-dependent breakage, passage and rejoining of double-stranded DNA.. Functionally, a type II topoisomerase that negatively supercoils closed circular double-stranded (ds) DNA in an ATP-dependent manner to modulate DNA topology and maintain chromosomes in an underwound state. Negative supercoiling favors strand separation, and DNA replication, transcription, recombination and repair, all of which involve strand separation. Also able to catalyze the interconversion of other topological isomers of dsDNA rings, including catenanes and knotted rings. Type II topoisomerases break and join 2 DNA strands simultaneously in an ATP-dependent manner. The protein is DNA gyrase subunit A of Helicobacter pylori (strain ATCC 700392 / 26695) (Campylobacter pylori).